A 228-amino-acid polypeptide reads, in one-letter code: Ephrin-A5b (228 aa).

The first 20 residues, 1-20, serve as a signal peptide directing secretion; the sequence is MLQAEMIVFVGVILWMCVFS. Residues 29-162 form the Ephrin RBD domain; it reads ADRYAVFWNR…KLKVFVRPPN (134 aa). An N-linked (GlcNAc...) asparagine glycan is attached at Asn37. Cystine bridges form between Cys62–Cys102 and Cys90–Cys151. A compositionally biased stretch (basic and acidic residues) spans 184–198; sequence LEPRDDTSHEAEPSR. Residues 184–205 form a disordered region; the sequence is LEPRDDTSHEAEPSRSDVSTSG. Ser204 carries GPI-anchor amidated serine lipidation. Residues 205 to 228 constitute a propeptide, removed in mature form; sequence GLRHQTSRPLLALLLLCISLYLLL.

Belongs to the ephrin family. Widespread expression in the embryo.

Its subcellular location is the cell membrane. Its function is as follows. Cell surface GPI-bound ligand for Eph receptors, a family of receptor tyrosine kinases which are crucial for migration, repulsion and adhesion during neuronal, vascular and epithelial development. Binds promiscuously Eph receptors residing on adjacent cells, leading to contact-dependent bidirectional signaling into neighboring cells. Induces compartmentalized signaling within a caveolae-like membrane microdomain when bound to the extracellular domain of its cognate receptor. This signaling event requires the activity of the Fyn tyrosine kinase. Activates the epha3 receptor to regulate cell-cell adhesion and cytoskeletal organization. With the receptor epha2 may regulate lens fiber cells shape and interactions and be important for lens transparency maintenance. May function actively to stimulate axon fasciculation. Controls axon growth and may be involved in the creation of the retino-tectal map. This is Ephrin-A5b (efna5b) from Danio rerio (Zebrafish).